A 426-amino-acid chain; its full sequence is Dihydroorotase (426 aa).

Residues H62 and H64 each contribute to the Zn(2+) site. Substrate contacts are provided by residues 64–66 and N96; that span reads HLR. D154, H181, H234, and D307 together coordinate Zn(2+). D307 is an active-site residue. H311 lines the substrate pocket.

The protein belongs to the metallo-dependent hydrolases superfamily. DHOase family. Class I DHOase subfamily. It depends on Zn(2+) as a cofactor.

The enzyme catalyses (S)-dihydroorotate + H2O = N-carbamoyl-L-aspartate + H(+). Its pathway is pyrimidine metabolism; UMP biosynthesis via de novo pathway; (S)-dihydroorotate from bicarbonate: step 3/3. In terms of biological role, catalyzes the reversible cyclization of carbamoyl aspartate to dihydroorotate. The sequence is that of Dihydroorotase from Syntrophus aciditrophicus (strain SB).